A 917-amino-acid polypeptide reads, in one-letter code: Lipoxygenase 6, chloroplastic (917 aa).

A chloroplast-targeting transit peptide spans 1-40; the sequence is MFVASPVKTNFNGVSLVKSPAFSALSCRKQHRVPISRQVR. The segment covering 46-57 has biased composition (basic and acidic residues); it reads EEKAVDQEDGKK. The interval 46–66 is disordered; the sequence is EEKAVDQEDGKKSTNKPLINS. The PLAT domain occupies 98-216; the sequence is ERFEHQLELF…DNPQARIIFR (119 aa). Residues 219–917 form the Lipoxygenase domain; the sequence is PCLPSETPDG…GRGIPNSISI (699 aa). The Fe cation site is built by His575, His580, His767, and Asn771. The disordered stretch occupies residues 880 to 904; the sequence is KDKKLKNRTGAGMPPYELLLPTSPH. Position 917 (Ile917) interacts with Fe cation.

This sequence belongs to the lipoxygenase family. It depends on Fe cation as a cofactor.

It localises to the plastid. The protein localises to the chloroplast. The enzyme catalyses (9Z,12Z)-octadecadienoate + O2 = (13S)-hydroperoxy-(9Z,11E)-octadecadienoate. It carries out the reaction (9Z,12Z,15Z)-octadecatrienoate + O2 = (13S)-hydroperoxy-(9Z,11E,15Z)-octadecatrienoate. It functions in the pathway lipid metabolism; oxylipin biosynthesis. Its function is as follows. Plant lipoxygenases may be involved in a number of diverse aspects of plant physiology including growth and development, pest resistance, and senescence or responses to wounding. Catalyzes the hydroperoxidation of lipids containing a cis,cis-1,4-pentadiene structure. 13S-lipoxygenase that can use linolenic acid as substrates. The protein is Lipoxygenase 6, chloroplastic of Arabidopsis thaliana (Mouse-ear cress).